Reading from the N-terminus, the 362-residue chain is 3-dehydroquinate synthase (362 aa).

NAD(+)-binding positions include 71 to 76 (DGEQNK), 105 to 109 (GVIGD), 129 to 130 (TT), Lys142, and Lys151. The Zn(2+) site is built by Glu184, His247, and His264.

It belongs to the sugar phosphate cyclases superfamily. Dehydroquinate synthase family. The cofactor is Co(2+). Zn(2+) serves as cofactor. It depends on NAD(+) as a cofactor.

The protein localises to the cytoplasm. The catalysed reaction is 7-phospho-2-dehydro-3-deoxy-D-arabino-heptonate = 3-dehydroquinate + phosphate. The protein operates within metabolic intermediate biosynthesis; chorismate biosynthesis; chorismate from D-erythrose 4-phosphate and phosphoenolpyruvate: step 2/7. Catalyzes the conversion of 3-deoxy-D-arabino-heptulosonate 7-phosphate (DAHP) to dehydroquinate (DHQ). The protein is 3-dehydroquinate synthase of Blochmanniella pennsylvanica (strain BPEN).